Here is a 641-residue protein sequence, read N- to C-terminus: MHLKKYLLKGLHRLQKGPGYSYKELLVWYCNNTNTHGPKRIICEGPKKKAMWFLITLLFTSLVCWQWGVFIRTYLSWEVSVSLSLGFKTMDFPAVTICNASPFQYSKVKHLLRDLDELMEAVLERILAPEHSDANATRTLNVTMWNYTPLVLIDEQNPHCPVVLDLFGDIHNGSASSSPAPARSCTVHGCKVAMRLCSLNGTVCTFRNFTSATQAVTEWYLLQATNIFSQVPQRELVEMSYPAERLILACLFGAEPCSYRNFTSIFHPDYGNCYIFNWGMTEKALPSANPGAEFGLKLILDIGQEDYVPFLTSTAGARLMLHEQRSYPFIKDEGIYAMSGTETSIGVLVDRLERKGEPYSQCTVNGSDVPVRNLYSDYNTTYSIQACIRSCFQDHMIQNCSCAHYLYPLPRGERYCNNREFPDWAYCYSHLRMSVAQRETCINMCKESCNDTQYKMTISMADWPSEASEDWIFHVLSQERDQSTNITLSRKGVVKLNIYFQEFNYRTIEESAANNIVWLLSNLGGQFGFWMGGSVLCLIEFGEILIDFVWITIIKLVAFAKSLRQKRAQARYAGPPPTVAELVEAHTNFGFQPDVARPGPDPGTYPDEQTLPIPGTPPPNYDSLRLQPLDVIESDSEGDAI.

Topologically, residues 1–50 (MHLKKYLLKGLHRLQKGPGYSYKELLVWYCNNTNTHGPKRIICEGPKKKA) are cytoplasmic. Residues 51–71 (MWFLITLLFTSLVCWQWGVFI) form a helical membrane-spanning segment. The Extracellular segment spans residues 72–533 (RTYLSWEVSV…GGQFGFWMGG (462 aa)). Intrachain disulfides connect cysteine 98–cysteine 273, cysteine 185–cysteine 190, cysteine 197–cysteine 204, cysteine 250–cysteine 257, cysteine 362–cysteine 449, cysteine 387–cysteine 445, cysteine 391–cysteine 441, cysteine 400–cysteine 427, and cysteine 402–cysteine 416. N-linked (GlcNAc...) asparagine glycosylation occurs at asparagine 141. Residue asparagine 261 is glycosylated (N-linked (GlcNAc...) asparagine). The chain crosses the membrane as a helical span at residues 534-554 (SVLCLIEFGEILIDFVWITII). At 555–641 (KLVAFAKSLR…IESDSEGDAI (87 aa)) the chain is on the cytoplasmic side. Residues 593–624 (PDVARPGPDPGTYPDEQTLPIPGTPPPNYDSL) are disordered. Residues 617–621 (PPPNY) carry the PY motif; recruits WW domain-containing proteins and is thereby required for ubiquitination and inhibition of the channel by NEDD4 and NEDD4L motif. 2 positions are modified to phosphoserine: serine 634 and serine 636.

Belongs to the amiloride-sensitive sodium channel (TC 1.A.6) family. SCNN1B subfamily. In terms of assembly, component of the heterotrimeric epithelial sodium channel (ENaC) composed of an alpha/SCNN1A, a beta/SCNN1B and a gamma/SCNN1G subunit. An additional delta/SCNN1D subunit can replace the alpha/SCNN1A subunit to form an alternative channel with specific properties. Interacts with WWP1 (via WW domains). Interacts with WWP2 (via WW domains); inhibits the channel. Interacts with the full-length immature form of PCSK9 (pro-PCSK9). Interacts (N-glycosylated) with BPIFA1; the interaction is direct and inhibits the proteolytic processing of SCNN1A and SCNN1G and the activation of ENaC. In terms of processing, ubiquitinated. Can be ubiquitinated at multiple sites and undergo monoubiquitination and polyubiquitination. Ubiquitination by NEDD4 or NEDD4L inhibits the ENaC channel through endocytosis, intracellular retention and degradation of its individual subunits. However, some studies could not confirm the ubiquitination of this subunit of the ENaC. Post-translationally, phosphorylated on serine and threonine residues. Aldosterone and insulin increase the basal level of phosphorylation. N-glycosylated. N-glycosylation is required for interaction with BPIFA1.

The protein localises to the apical cell membrane. Its subcellular location is the cytoplasmic vesicle membrane. The enzyme catalyses Na(+)(in) = Na(+)(out). With respect to regulation, originally identified and characterized by its inhibition by the diuretic drug amiloride. This is one of the three pore-forming subunits of the heterotrimeric epithelial sodium channel (ENaC), a critical regulator of sodium balance and fluid homeostasis. ENaC operates in epithelial tissues, where it mediates the electrodiffusion of sodium ions from extracellular fluid through the apical membrane of cells, with water following osmotically. It plays a key role in maintaining sodium homeostasis through electrogenic sodium reabsorption in the kidneys. Additionally, ENaC is essential for airway surface liquid homeostasis, which is crucial for proper mucus clearance. This Canis lupus familiaris (Dog) protein is Epithelial sodium channel subunit beta.